We begin with the raw amino-acid sequence, 226 residues long: MEGIFTFFGVISENHTFLFVSHMFLAALLTLIVAKLATKRLQVVPTGCQNVMEAYLEGVVAMGRDVIGESYAKKYLPLVATLGLFIFFANLMEIIPGFEPPSGNINFTLALALIVFIYYNFEGIRKNGVIHYFAHFAGPVKLLAPLMFPIEIVSHISRIISLSFRLFGNIKGDDLFVWVLLMLAPWIVPLPGFALMTFSAFLQTFIFMILTYVYLAGAVLLHEESL.

The next 5 helical transmembrane spans lie at 17–37 (FLFVSHMFLAALLTLIVAKLA), 78–98 (LVATLGLFIFFANLMEIIPGF), 104–124 (NINFTLALALIVFIYYNFEGI), 175–195 (LFVWVLLMLAPWIVPLPGFAL), and 201–221 (FLQTFIFMILTYVYLAGAVLL).

The protein belongs to the ATPase A chain family. In terms of assembly, F-type ATPases have 2 components, CF(1) - the catalytic core - and CF(0) - the membrane proton channel. CF(1) has five subunits: alpha(3), beta(3), gamma(1), delta(1), epsilon(1). CF(0) has three main subunits: a(1), b(2) and c(9-12). The alpha and beta chains form an alternating ring which encloses part of the gamma chain. CF(1) is attached to CF(0) by a central stalk formed by the gamma and epsilon chains, while a peripheral stalk is formed by the delta and b chains.

The protein localises to the cell inner membrane. Its function is as follows. Key component of the proton channel; it plays a direct role in the translocation of protons across the membrane. This chain is ATP synthase subunit a, found in Nitratiruptor sp. (strain SB155-2).